Reading from the N-terminus, the 289-residue chain is Diaminopimelate epimerase (289 aa).

The substrate site is built by N13, Q47, and N67. Residue C76 is the Proton donor of the active site. Residues 77-78 (GN), N167, N200, and 218-219 (ER) each bind substrate. The Proton acceptor role is filled by C227. 228–229 (GT) lines the substrate pocket.

The protein belongs to the diaminopimelate epimerase family. As to quaternary structure, homodimer.

The protein localises to the cytoplasm. It carries out the reaction (2S,6S)-2,6-diaminopimelate = meso-2,6-diaminopimelate. It functions in the pathway amino-acid biosynthesis; L-lysine biosynthesis via DAP pathway; DL-2,6-diaminopimelate from LL-2,6-diaminopimelate: step 1/1. In terms of biological role, catalyzes the stereoinversion of LL-2,6-diaminopimelate (L,L-DAP) to meso-diaminopimelate (meso-DAP), a precursor of L-lysine and an essential component of the bacterial peptidoglycan. This is Diaminopimelate epimerase from Burkholderia thailandensis (strain ATCC 700388 / DSM 13276 / CCUG 48851 / CIP 106301 / E264).